The chain runs to 504 residues: Maturase K (504 aa).

This sequence belongs to the intron maturase 2 family. MatK subfamily.

The protein resides in the plastid. It is found in the chloroplast. Its function is as follows. Usually encoded in the trnK tRNA gene intron. Probably assists in splicing its own and other chloroplast group II introns. The sequence is that of Maturase K from Alliaria petiolata (Garlic mustard).